The sequence spans 2282 residues: Cation channel sperm-associated targeting subunit tau (2282 aa).

The disordered stretch occupies residues 1 to 118; the sequence is MELPPPGNRR…RGKGKGTGTR (118 aa). Polar residues-rich tracts occupy residues 11–41 and 50–87; these read VSIN…SLKR and MMSN…NLSS. Basic and acidic residues predominate over residues 90–109; the sequence is YADEEGKPLTDKNKDKDKGR. The C2 domain maps to 131–266; sequence QSDEMAIANQ…IQKGCFTEVM (136 aa). 10 disordered regions span residues 397–416, 656–679, 747–1066, 1104–1153, 1217–1240, 1426–1445, 1452–1515, 1542–1569, 1908–1928, and 2187–2222; these read MTKR…SSAL, EHED…TWAE, NKLI…SHDP, SAKS…DKQS, YTND…TDDR, NSLL…DSRS, RQNT…SLDK, ERRQ…LEKT, NQAN…LKKQ, and PKKS…EPNK. 5 stretches are compositionally biased toward polar residues: residues 750–760, 783–792, 800–841, 849–858, and 953–974; these read ITDSSFNTTKP, SDPSSNTTKP, DPSS…SDLN, IVSTISSDPN, and SARS…TKLS. A compositionally biased stretch (low complexity) spans 1104–1123; that stretch reads SAKSLDSNNSSASSSPTVNS. The segment covering 1124–1136 has biased composition (polar residues); the sequence is DTTTNAAEPSGTK. 2 stretches are compositionally biased toward polar residues: residues 1452–1466 and 1473–1482; these read RQNT…SSVS and DCQSISTQES. Over residues 1484-1493 the composition is skewed to basic and acidic residues; it reads YPVRDTKSDS. Residues 1495 to 1504 show a composition bias toward acidic residues; that stretch reads NDTEEMELDS. Basic and acidic residues-rich tracts occupy residues 1542–1555 and 1916–1925; these read ERRQ…ESLI and SPERPSDISL.

Component of the CatSper complex or CatSpermasome composed of the core pore-forming members CATSPER1, CATSPER2, CATSPER3 and CATSPER4 as well as auxiliary members CATSPERB, CATSPERG, CATSPERD, CATSPERE, CATSPERZ, C2CD6/CATSPERT, SLCO6C1, TMEM249, TMEM262 and EFCAB9. HSPA1 may be an additional auxiliary complex member. The core complex members CATSPER1, CATSPER2, CATSPER3 and CATSPER4 form a heterotetrameric channel. The auxiliary CATSPERB, CATSPERG, CATSPERD and CATSPERE subunits form a pavilion-like structure over the pore which stabilizes the complex through interactions with CATSPER4, CATSPER3, CATSPER1 and CATSPER2 respectively. SLCO6C1 interacts with CATSPERE and TMEM262/CATSPERH interacts with CATSPERB, further stabilizing the complex. C2CD6/CATSPERT interacts at least with CATSPERD and is required for targeting the CatSper complex in the flagellar membrane. Expressed in cauda sperm (at protein level).

The protein resides in the cell projection. It localises to the cilium. It is found in the flagellum membrane. Its function is as follows. Auxiliary component of the CatSper complex, a complex involved in sperm cell hyperactivation. Sperm cell hyperactivation is needed for sperm motility which is essential late in the preparation of sperm for fertilization. Required for CatSper complex targeting and trafficking into the quadrilinear nanodomains. Targets the preassembled CatSper complexes to elongating flagella, where it links the channel-carrying vesicles and motor proteins. The protein is Cation channel sperm-associated targeting subunit tau of Mus musculus (Mouse).